The chain runs to 201 residues: FMN-dependent NADH:quinone oxidoreductase (201 aa).

FMN-binding positions include serine 10, 16 to 18 (SQS), 96 to 99 (MYNF), and 140 to 143 (SRGG).

It belongs to the azoreductase type 1 family. In terms of assembly, homodimer. FMN serves as cofactor.

The catalysed reaction is 2 a quinone + NADH + H(+) = 2 a 1,4-benzosemiquinone + NAD(+). It carries out the reaction N,N-dimethyl-1,4-phenylenediamine + anthranilate + 2 NAD(+) = 2-(4-dimethylaminophenyl)diazenylbenzoate + 2 NADH + 2 H(+). In terms of biological role, quinone reductase that provides resistance to thiol-specific stress caused by electrophilic quinones. Also exhibits azoreductase activity. Catalyzes the reductive cleavage of the azo bond in aromatic azo compounds to the corresponding amines. In Salmonella choleraesuis (strain SC-B67), this protein is FMN-dependent NADH:quinone oxidoreductase.